The primary structure comprises 569 residues: F-box-like/WD repeat-containing protein TBL1X (569 aa).

Residues 55–87 form the LisH domain; that stretch reads TSDEVNFLVYRYLQESGFSHSAFTFGIESHISQ. One can recognise an F-box-like domain in the interval 92-137; that stretch reads GTLVPPAALISILQKGLQYVEAEISINEDGTVFDGRPIESLSLIDA. Residue lysine 153 is modified to N6-acetyllysine. Residues 170–195 are disordered; the sequence is TSASVSQQNPSKNREATVNGEENRAH. Serine 175 is modified (phosphoserine). WD repeat units follow at residues 222–261, 278–317, 319–358, 361–401, 402–441, 444–492, 495–534, and 536–568; these read GHESEVFICAWNPVSDLLASGSGDSTARIWNLNENSNGGS, PSNKDVTSLDWNTNGTLLATGSYDGFARIWTEDGNLASTL, QHKGPIFALKWNRKGNYILSAGVDKTTIIWDAHTGEAKQQ, FHSA…KTFQ, GHTNEVNAIKWDPSGMLLASCSDDMTLKIWSMKQEVCIHD, AHNK…CTHT, KHQEPVYSVAFSPDGRYLASGSFDKCVHIWNTQSGNLVHS, and RGTGGIFEVCWNARGDKVGASASDGSVCVLDLR. A Glycyl lysine isopeptide (Lys-Gly) (interchain with G-Cter in SUMO2) cross-link involves residue lysine 332.

Belongs to the WD repeat EBI family. In terms of assembly, homotetramer; dimer of dimers. Component of the N-Cor repressor complex, at least composed of NCOR1, NCOR2, HDAC3, TBL1X, TBL1R, CORO2A and GPS2. Interacts with GPS2 (when sumoylated); leading to protect GPS2 against degradation by the proteasome. Component of a E3 ubiquitin ligase complex containing UBE2D1, SIAH1, CACYBP/SIP, SKP1, APC and TBL1X. Probably part of other corepressor complexes, that do not contain NCOR1 and NCOR2. Interacts with histones H2B, H3a and H4. Interacts with MECP2; recruits TBL1X to the heterochromatin foci. Interacts with USP44.

It is found in the nucleus. Functionally, F-box-like protein involved in the recruitment of the ubiquitin/19S proteasome complex to nuclear receptor-regulated transcription units. Plays an essential role in transcription activation mediated by nuclear receptors. Probably acts as integral component of corepressor complexes that mediates the recruitment of the 19S proteasome complex, leading to the subsequent proteasomal degradation of transcription repressor complexes, thereby allowing cofactor exchange. The protein is F-box-like/WD repeat-containing protein TBL1X (TBL1X) of Macaca fascicularis (Crab-eating macaque).